The following is a 62-amino-acid chain: Large ribosomal subunit protein eL24 (62 aa).

The Zn(2+) site is built by Cys-6, Cys-9, Cys-32, and Cys-36. Residues 6-36 (CYFCGQMLEPGTGKLYIKKDGSTYFMCSSKC) form a C4-type zinc finger.

It belongs to the eukaryotic ribosomal protein eL24 family. As to quaternary structure, part of the 50S ribosomal subunit. Forms a cluster with proteins L3 and L14. Requires Zn(2+) as cofactor.

Its function is as follows. Binds to the 23S rRNA. The sequence is that of Large ribosomal subunit protein eL24 from Methanosarcina mazei (strain ATCC BAA-159 / DSM 3647 / Goe1 / Go1 / JCM 11833 / OCM 88) (Methanosarcina frisia).